Here is a 50-residue protein sequence, read N- to C-terminus: uncharacterized protein (50 aa).

This is an uncharacterized protein from Dichelobacter nodosus (Bacteroides nodosus).